Consider the following 286-residue polypeptide: NADP-dependent dehydrogenase clz5 (286 aa).

NADP(+)-binding residues include Ser-49, Leu-51, Asp-93, Tyr-207, Lys-211, Ile-241, and Gln-245. Catalysis depends on Tyr-207, which acts as the Proton acceptor. Catalysis depends on Tyr-207, which acts as the Proton donor. The Lowers pKa of active site Tyr role is filled by Lys-211.

Belongs to the short-chain dehydrogenases/reductases (SDR) family. As to quaternary structure, homodimer.

Its subcellular location is the cytoplasm. The protein localises to the cytosol. The protein operates within secondary metabolite biosynthesis. NADP-dependent dehydrogenase; part of the gene cluster that mediates the biosynthesis of squalestatin S1 (SQS1, also known as zaragozic acid A), a heavily oxidized fungal polyketide that offers potent cholesterol lowering activity by targeting squalene synthase (SS). SQS1 is composed of a 2,8-dioxobicyclic[3.2.1]octane-3,4,5-tricarboxyclic acid core that is connected to two lipophilic polyketide arms. These initial steps feature the priming of an unusual benzoic acid starter unit onto the highly reducing polyketide synthase clz14, followed by oxaloacetate extension and product release to generate a tricarboxylic acid containing product. The phenylalanine ammonia lyase (PAL) clz10 and the acyl-CoA ligase clz12 are involved in transforming phenylalanine into benzoyl-CoA. The citrate synthase-like protein clz17 is involved in connecting the C-alpha-carbons of the hexaketide chain and oxaloacetate to afford the tricarboxylic acid unit. The potential hydrolytic enzymes, clz11 and clz13, are in close proximity to pks2 and may participate in product release. On the other side, the tetraketide arm is synthesized by a the squalestatin tetraketide synthase clz2 and enzymatically esterified to the core in the last biosynthetic step, by the acetyltransferase clz6. The biosynthesis of the tetraketide must involve 3 rounds of chain extension. After the first and second rounds methyl-transfer occurs, and in all rounds of extension the ketoreductase and dehydratase are active. The enoyl reductase and C-MeT of clz2 are not active in the final round of extension. The acetyltransferase clz6 appears to have a broad substrate selectivity for its acyl CoA substrate, allowing the in vitro synthesis of novel squalestatins. The biosynthesis of SQS1 requires several oxidative steps likely performed by oxidoreductases clz3, clz15 and clz16. Finally, in support of the identification of the cluster as being responsible for SQS1 production, the cluster contains a gene encoding a putative squalene synthase (SS) clz20, suggesting a likely mechanism for self-resistance. This Cochliobolus lunatus (Filamentous fungus) protein is NADP-dependent dehydrogenase clz5.